We begin with the raw amino-acid sequence, 371 residues long: Glyco-Gag protein (371 aa).

Topologically, residues 1–51 (MSGASSGTAIGAHLFGVSPEYRVLIGDEGAGPSKSLSEVSFSVWYRSRAAR) are cytoplasmic. The chain crosses the membrane as a helical span at residues 52–72 (LVILCLVASFLVPCLTFLIAE). Residues 73–371 (AVMGQTVTTP…NVIDETFPLT (299 aa)) lie on the Extracellular side of the membrane. Asn-134 is a glycosylation site (N-linked (GlcNAc...) asparagine; by host). 2 disordered regions span residues 171–281 (VRPF…NNRP) and 350–371 (VPGE…FPLT). The segment covering 174–193 (FLPPPKPPTPLPQPLSPQPS) has biased composition (pro residues). Over residues 194–203 (APLTSSLYPV) the composition is skewed to low complexity. Composition is skewed to pro residues over residues 204-220 (VPKP…PDPS) and 230-245 (EPPP…PSGP).

Post-translationally, glycosylated by host. Cleaved by host near the middle of the molecule, releasing the c-terminal half containing capsid and nucleoprotein domains op GAG.

The protein localises to the host cell membrane. Its function is as follows. Plays a role in viral particle release. Presumably acts by facilitating the fission of the virion bud at the cell surface. The protein is Glyco-Gag protein of Feline sarcoma virus (strain Snyder-Theilen).